Here is a 239-residue protein sequence, read N- to C-terminus: Probable 2-phosphosulfolactate phosphatase (239 aa).

Belongs to the ComB family. Mg(2+) serves as cofactor.

The enzyme catalyses (2R)-O-phospho-3-sulfolactate + H2O = (2R)-3-sulfolactate + phosphate. The polypeptide is Probable 2-phosphosulfolactate phosphatase (Clostridium botulinum (strain Kyoto / Type A2)).